Here is a 344-residue protein sequence, read N- to C-terminus: Uroporphyrinogen decarboxylase (344 aa).

Substrate-binding positions include 26–30 (RQAGR), Phe45, Asp75, Tyr151, Ser206, and His320.

The protein belongs to the uroporphyrinogen decarboxylase family. Homodimer.

It localises to the cytoplasm. It catalyses the reaction uroporphyrinogen III + 4 H(+) = coproporphyrinogen III + 4 CO2. It functions in the pathway porphyrin-containing compound metabolism; protoporphyrin-IX biosynthesis; coproporphyrinogen-III from 5-aminolevulinate: step 4/4. Functionally, catalyzes the decarboxylation of four acetate groups of uroporphyrinogen-III to yield coproporphyrinogen-III. The sequence is that of Uroporphyrinogen decarboxylase from Staphylococcus epidermidis (strain ATCC 35984 / DSM 28319 / BCRC 17069 / CCUG 31568 / BM 3577 / RP62A).